Reading from the N-terminus, the 504-residue chain is Multidrug efflux pump LfrA (504 aa).

Helical transmembrane passes span 19 to 39 (WVAL…NTVL), 58 to 78 (LWIV…MGSL), 87 to 107 (LLLI…FAPS), 110 to 130 (LLVG…PSTL), 145 to 165 (LAIA…PIVG), 172 to 192 (FHWG…LVLG), 206 to 226 (PFDP…VWAV), 233 to 253 (GLSA…ALFV), 275 to 295 (TSSI…IFFI), 309 to 329 (TAGL…LAVV), 338 to 358 (DTLM…ILLF), 361 to 381 (NLTV…VGVS), 408 to 428 (AYEL…TAFY), and 480 to 500 (IAPT…VVGV).

This sequence belongs to the major facilitator superfamily.

It is found in the cell inner membrane. Its activity is regulated as follows. Inhibited by the protonophore carbonyl cyanide m-chorophenylhydrazone (CCCP). Ethidium bromide efflux is inhibited by chlorpromazine, thioridazine and verapamil. Functionally, energy-dependent efflux pump that contributes to drug resistance. Catalyzes the efflux of norfloxacin and several related fluoroquinolones (FQ). Contributes significantly to the intrinsic MICs for ethidium bromide and acriflavine. Overexpression confers low-level resistance to hydrophilic FQ such as ciprofloxacin, ofloxacin and levofloxacin, and to ethidium bromide, acridine, acriflavine, rhodamine 123 and some quaternary ammonium compounds. May contribute to resistance to certain beta-lactams. Probably uses the proton motive force to export drugs. The sequence is that of Multidrug efflux pump LfrA from Mycolicibacterium smegmatis (strain ATCC 700084 / mc(2)155) (Mycobacterium smegmatis).